A 424-amino-acid chain; its full sequence is CinA-like protein (424 aa).

Belongs to the CinA family.

This is CinA-like protein from Shewanella baltica (strain OS155 / ATCC BAA-1091).